The following is a 325-amino-acid chain: Adenine deaminase (325 aa).

Zn(2+) contacts are provided by His8, His10, and His186. The active-site Proton donor is the Glu189. Asp267 is a binding site for Zn(2+). Position 268 (Asp268) interacts with substrate.

This sequence belongs to the metallo-dependent hydrolases superfamily. Adenosine and AMP deaminases family. Adenine deaminase type 2 subfamily. The cofactor is Zn(2+).

The catalysed reaction is adenine + H2O + H(+) = hypoxanthine + NH4(+). Catalyzes the hydrolytic deamination of adenine to hypoxanthine. Plays an important role in the purine salvage pathway and in nitrogen catabolism. This is Adenine deaminase from Chelativorans sp. (strain BNC1).